The sequence spans 349 residues: MQGLRTLFLLLTACLASRADPASTLPDIQVQENFSESRIYGKWYNLAVGSTCPWLSRIKDKMSVSTLVLQEGATETEISMTSTRWRRGVCEEITGAYQKTDIDGKFLYHKSKWNITLESYVVHTNYDEYAIFLTKKSSHHHGLTITAKLYGREPQLRDSLLQEFKDVALNVGISENSIIFMPDRGECVPGDREVEPTSIARARRAVLPQESEGSGTEPLITGTLKKEDSCQLNYSEGPCLGMQERYYYNGASMACETFQYGGCLGNGNNFISEKDCLQTCRTIAACNLPIVQGPCRAFIKLWAFDAAQGKCIQFHYGGCKGNGNKFYSEKECKEYCGVPGDGYEELIRS.

A signal peptide spans 1 to 19; that stretch reads MQGLRTLFLLLTACLASRA. N33 carries N-linked (GlcNAc...) asparagine glycosylation. Residues C52 and K110 each contribute to the 3-hydroxy-L-kynurenine site. Cysteines 90 and 187 form a disulfide. A glycan (N-linked (GlcNAc...) asparagine) is linked at N114. 3-hydroxy-L-kynurenine contacts are provided by K136 and K148. S214 is a glycosylation site (O-linked (Xyl...) (chondroitin sulfate) serine). Cystine bridges form between C230-C280, C239-C263, C255-C276, C286-C336, C295-C319, and C311-C332. 2 consecutive BPTI/Kunitz inhibitor domains span residues 230 to 280 and 286 to 336; these read CQLN…LQTC and CNLP…KEYC. An N-linked (GlcNAc...) asparagine glycan is attached at N233.

It in the N-terminal section; belongs to the calycin superfamily. Lipocalin family. In terms of assembly, monomer. Homodimer. In plasma, it occurs as a monomer or dimer and in covalently-linked complexes with immunoglobulin A (IgA), ALB/albumin and F2/prothrombin. Chromophore-bound alpha-1-microglobulin interacts with the constant region of immunoglobulin A. Chromophore-bound alpha-1-microglobulin interacts with ALB with molar ratio 2:1 and 1:1; this interaction does not prevent fatty acid binding to ALB. Interacts with F2/prothrombin (via N-terminus) with molar ratio 2:1 and 1:1; this interaction does not prevent the activation of prothrombin to thrombin. Interacts with NDUFAB1, a subunit of mitochondrial complex I. Interacts with FN1. As to quaternary structure, I-alpha-I plasma protease inhibitors are assembled from one or two heavy chains (HC) and one light chain, bikunin. Inter-alpha-inhibitor (I-alpha-I) is composed of ITIH1/HC1, ITIH2/HC2 and bikunin, and pre-alpha-inhibitor (P-alpha-I) of ITIH3/HC3 and bikunin. Interacts with TNFAIP6 (via Link domain). Monomer. Also occurs as a complex with tryptase in mast cells. Post-translationally, the precursor is proteolytically processed into separately functioning proteins. 3-hydroxykynurenine, an oxidized tryptophan metabolite that is common in biological fluids, reacts with Cys-53, Lys-111, Lys-137, and Lys-149 to form heterogeneous polycyclic chromophores including hydroxanthommatin. The reaction by alpha-1-microglobulin is autocatalytic; the human protein forms chromophore even when expressed in insect and bacterial cells. The chromophore can react with accessible cysteines forming non-reducible thioether cross-links with other molecules of alpha-1-microglobulin or with other proteins such as Ig alpha-1 chain C region 'Cys-352'. In terms of processing, heavy chains are interlinked with bikunin via a chondroitin 4-sulfate bridge to the C-terminal aspartate. Post-translationally, proteolytically cleaved by PRSS3 at Kunitz domain 2. In terms of tissue distribution, expressed by the liver and secreted in plasma (at protein level).

Its subcellular location is the secreted. The protein resides in the endoplasmic reticulum. It localises to the cytoplasm. The protein localises to the cytosol. It is found in the cell membrane. Its subcellular location is the nucleus membrane. The protein resides in the mitochondrion inner membrane. It localises to the extracellular space. The protein localises to the extracellular matrix. Functionally, antioxidant and tissue repair protein with reductase, heme-binding and radical-scavenging activities. Removes and protects against harmful oxidants and repairs macromolecules in intravascular and extravascular spaces and in intracellular compartments. Intravascularly, plays a regulatory role in red cell homeostasis by preventing heme- and reactive oxygen species-induced cell damage. Binds and degrades free heme to protect fetal and adult red blood cells from hemolysis. Reduces extracellular methemoglobin, a Fe3+ (ferric) form of hemoglobin that cannot bind oxygen, back to the Fe2+ (ferrous) form deoxyhemoglobin, which has oxygen-carrying potential. Upon acute inflammation, inhibits oxidation of low-density lipoprotein particles by MPO and limits vascular damage. Extravascularly, protects from oxidation products formed on extracellular matrix structures and cell membranes. Catalyzes the reduction of carbonyl groups on oxidized collagen fibers and preserves cellular and extracellular matrix ultrastructures. Importantly, counteracts the oxidative damage at blood-placenta interface, preventing leakage of free fetal hemoglobin into the maternal circulation. Intracellularly, has a role in maintaining mitochondrial redox homeostasis. Bound to complex I of the respiratory chain of mitochondria, may scavenge free radicals and preserve mitochondrial ATP synthesis. Protects renal tubule epithelial cells from heme-induced oxidative damage to mitochondria. Reduces cytochrome c from Fe3+ (ferric) to the Fe2+ (ferrous) state through formation of superoxide anion radicals in the presence of ascorbate or NADH/NADPH electron donor cofactors, ascorbate being the preferred cofactor. Has a chaperone role in facilitating the correct folding of bikunin in the endoplasmic reticulum compartment. Its function is as follows. Kunitz-type serine protease inhibitor and structural component of extracellular matrix with a role in extracellular space remodeling and cell adhesion. Among others, has antiprotease activity toward kallikrein, a protease involved in airway inflammation; inhibits GZMK/granzyme, a granule-stored serine protease involved in NK and T cell cytotoxic responses; and inhibits PLG/plasmin, a protease required for activation of matrix metalloproteinases. As part of I-alpha-I complex, provides for the heavy chains to be transferred from I-alpha-I complex to hyaluronan in the presence of TNFAIP6, in a dynamic process that releases free bikunin and remodels extracellular matrix proteoglycan structures. Free bikunin, but not its heavy chain-bound form, acts as a potent protease inhibitor in airway secretions. Part of hyaluronan-rich extracellular matrix that surrounds oocyte during cumulus oophorus expansion, an indispensable process for proper ovulation. Also inhibits calcium oxalate crystallization. In terms of biological role, kunitz-type serine protease inhibitor. Has high catalytic efficiency for F10/blood coagulation factor Xa and may act as an anticoagulant by inhibiting prothrombin activation. Inhibits trypsin and mast cell CMA1/chymase and tryptase proteases. This is Protein AMBP (Ambp) from Mus musculus (Mouse).